We begin with the raw amino-acid sequence, 457 residues long: MAFRVSISTFGKSLRVRRVANVSAPLANASPFLRTGWAARPPGTNNGHGFRFTPACFITSDAFLSRLAKGKAETDDTHYHHPASVLPDSAEQLSLLVKDPDQPENSKVLRVAIIGAPNAGKSTLSNQLLGRKVFAVSKKVHTTRARALGVLTEDDTQIILLDTPGLTTPTKVKRHQLEKSLLEDPWNTVKEAGLVVVMVDVSDKWACNKLDFEVLKCLTQHPDVPAVLVLNKVDLLKSKSRLLEITADLTCGVVNGRKLQVRRVIKPPWAERRTDREARTSGSGDEEKPGGDVADGEGSEALSGLSKEQLRALKTQQGWAHFKDVFMVSAVDGEDVETLKRYLVVGAKPGSWQYHSDVLTDQTPEEICTNTVREKLLEYLPKEVPYTMTQAIDLWHDRENGELDIAVKLYVKKESHMKMVIGQAGQMVARIAREAGDDLSTVFLREVKLRLSVKVKN.

The N-terminal 18 residues, 1-18 (MAFRVSISTFGKSLRVRR), are a transit peptide targeting the mitochondrion. Residues 107–350 (KVLRVAIIGA…RYLVVGAKPG (244 aa)) form the Era-type G domain. A G1 region spans residues 115 to 122 (GAPNAGKS). A GTP-binding site is contributed by 115–122 (GAPNAGKS). The tract at residues 141–145 (HTTRA) is G2. A G3 region spans residues 162-165 (DTPG). GTP-binding positions include 162 to 166 (DTPGL) and 231 to 234 (NKVD). The tract at residues 231 to 234 (NKVD) is G4. Positions 270-290 (AERRTDREARTSGSGDEEKPG) are enriched in basic and acidic residues. Positions 270–300 (AERRTDREARTSGSGDEEKPGGDVADGEGSE) are disordered. The tract at residues 328–330 (VSA) is G5. The KH type-2 domain maps to 376–457 (LLEYLPKEVP…KLRLSVKVKN (82 aa)).

It belongs to the TRAFAC class TrmE-Era-EngA-EngB-Septin-like GTPase superfamily. Era GTPase family.

Its subcellular location is the mitochondrion matrix. It localises to the mitochondrion inner membrane. Functionally, probable GTPase that plays a role in the mitochondrial ribosomal small subunit assembly. Specifically binds the 12S mitochondrial rRNA (12S mt-rRNA) to a 33 nucleotide section delineating the 3' terminal stem-loop region. May act as a chaperone that protects the 12S mt-rRNA on the 28S mitoribosomal subunit during ribosomal small subunit assembly. This Salmo salar (Atlantic salmon) protein is GTPase Era, mitochondrial (eral1).